A 222-amino-acid chain; its full sequence is Protein-L-isoaspartate O-methyltransferase (222 aa).

Ser-69 is a catalytic residue.

The protein belongs to the methyltransferase superfamily. L-isoaspartyl/D-aspartyl protein methyltransferase family.

Its subcellular location is the cytoplasm. The enzyme catalyses [protein]-L-isoaspartate + S-adenosyl-L-methionine = [protein]-L-isoaspartate alpha-methyl ester + S-adenosyl-L-homocysteine. Its function is as follows. Catalyzes the methyl esterification of L-isoaspartyl residues in peptides and proteins that result from spontaneous decomposition of normal L-aspartyl and L-asparaginyl residues. It plays a role in the repair and/or degradation of damaged proteins. The sequence is that of Protein-L-isoaspartate O-methyltransferase from Nitrosomonas europaea (strain ATCC 19718 / CIP 103999 / KCTC 2705 / NBRC 14298).